We begin with the raw amino-acid sequence, 1193 residues long: Pyruvate carboxylase (1193 aa).

The 453-residue stretch at 41 to 493 (QFQKILVANR…WTTFIDDTPE (453 aa)) folds into the Biotin carboxylation domain. ATP-binding residues include lysine 159, glutamate 243, and histidine 278. Residues 163-360 (RQLAIRCNVP…IVAAQIQIAA (198 aa)) enclose the ATP-grasp domain. Residue arginine 335 is part of the active site. In terms of domain architecture, Pyruvate carboxyltransferase spans 579-847 (CLIMDTTWRD…DPGLNSAHVR (269 aa)). Substrate-binding positions include 587-591 (RDAHQ) and arginine 660. Aspartate 588 contacts a divalent metal cation. Positions 756, 786, and 788 each coordinate a divalent metal cation. The residue at position 756 (lysine 756) is an N6-carboxylysine. Threonine 921 contributes to the substrate binding site. A Biotinyl-binding domain is found at 1116 to 1191 (KADVGDSSQV…DGQDLVCKIT (76 aa)). Lysine 1157 carries the post-translational modification N6-biotinyllysine.

Biotin is required as a cofactor. The cofactor is Zn(2+).

The protein localises to the cytoplasm. The enzyme catalyses hydrogencarbonate + pyruvate + ATP = oxaloacetate + ADP + phosphate + H(+). Its pathway is carbohydrate biosynthesis; gluconeogenesis. Its function is as follows. Pyruvate carboxylase catalyzes a 2-step reaction, involving the ATP-dependent carboxylation of the covalently attached biotin in the first step and the transfer of the carboxyl group to pyruvate in the second. In Aspergillus terreus, this protein is Pyruvate carboxylase (pyc).